A 518-amino-acid polypeptide reads, in one-letter code: Zinc finger protein 449 (518 aa).

Positions 30 to 112 constitute an SCAN box domain; that stretch reads RQRFRQFQYR…SLIEDLQREL (83 aa). The span at 292–304 shows a compositional bias: polar residues; it reads NPTLGETPENSNL. The interval 292–325 is disordered; that stretch reads NPTLGETPENSNLEEPLNPKPHKKKSPGEKPHRC. C2H2-type zinc fingers lie at residues 323 to 345, 351 to 373, 379 to 401, 407 to 429, 435 to 457, 463 to 485, and 491 to 513; these read HRCPQCGKCFARKSQLTGHQRIH, HKCPECGKRFLRSSDLYRHQRLH, YECTVCKKRFTRRSHLIGHQRTH, YKCLECGKSFCHGSSLKRHLKTH, HRCHNCGKSFSRLTALTLHQRTH, FKCNYCGKSFRQRPSLVIHLRIH, and YKCTHCSKSFRQRAGLIMHQVTH.

Belongs to the krueppel C2H2-type zinc-finger protein family.

The protein localises to the nucleus. In terms of biological role, may be involved in transcriptional regulation. The sequence is that of Zinc finger protein 449 (ZNF449) from Homo sapiens (Human).